The sequence spans 263 residues: Ribosomal RNA small subunit methyltransferase A (263 aa).

S-adenosyl-L-methionine is bound by residues asparagine 20, leucine 22, glycine 47, glutamate 68, aspartate 90, and asparagine 110.

It belongs to the class I-like SAM-binding methyltransferase superfamily. rRNA adenine N(6)-methyltransferase family. RsmA subfamily.

The protein localises to the cytoplasm. It catalyses the reaction adenosine(1518)/adenosine(1519) in 16S rRNA + 4 S-adenosyl-L-methionine = N(6)-dimethyladenosine(1518)/N(6)-dimethyladenosine(1519) in 16S rRNA + 4 S-adenosyl-L-homocysteine + 4 H(+). In terms of biological role, specifically dimethylates two adjacent adenosines (A1518 and A1519) in the loop of a conserved hairpin near the 3'-end of 16S rRNA in the 30S particle. May play a critical role in biogenesis of 30S subunits. This is Ribosomal RNA small subunit methyltransferase A from Chlorobium limicola (strain DSM 245 / NBRC 103803 / 6330).